The primary structure comprises 271 residues: Phosphate import ATP-binding protein PstB (271 aa).

An ABC transporter domain is found at 25-266; that stretch reads FDTKNLNLWY…PSDKRTEDYI (242 aa). 57–64 lines the ATP pocket; it reads GPSGCGKS.

This sequence belongs to the ABC transporter superfamily. Phosphate importer (TC 3.A.1.7) family. In terms of assembly, the complex is composed of two ATP-binding proteins (PstB), two transmembrane proteins (PstC and PstA) and a solute-binding protein (PstS).

The protein localises to the cell membrane. It catalyses the reaction phosphate(out) + ATP + H2O = ADP + 2 phosphate(in) + H(+). In terms of biological role, part of the ABC transporter complex PstSACB involved in phosphate import. Responsible for energy coupling to the transport system. The chain is Phosphate import ATP-binding protein PstB from Bacillus anthracis.